We begin with the raw amino-acid sequence, 654 residues long: Potassium voltage-gated channel subfamily A member 4 (654 aa).

At 1–305 the chain is on the cytoplasmic side; it reads MEVAMVSAES…LLFEYPESSS (305 aa). Residues 39–52 are compositionally biased toward low complexity; sequence AAAAAVAAATAAVE. The interval 39–146 is disordered; the sequence is AAAAAVAAAT…EGRFYYSEDD (108 aa). Basic residues predominate over residues 81–99; the sequence is GSRRRRRQRPEKKKAHHRQ. Ser122 carries the phosphoserine modification. Acidic residues predominate over residues 122 to 137; that stretch reads SEEEEEEEDEEEEEEE. Residues 306–327 form a helical membrane-spanning segment; the sequence is PARGIAIVSVLVILISIVIFCL. The Extracellular portion of the chain corresponds to 328–371; that stretch reads ETLPEFRDDRDLIMALSAGGHSGLLNDTSAPHLENSGHTIFNDP. Asn353 is a glycosylation site (N-linked (GlcNAc...) asparagine). Residues 372-393 form a helical membrane-spanning segment; it reads FFIVETVCIVWFSFEFVVRCFA. At 394–404 the chain is on the cytoplasmic side; sequence CPSQALFFKNI. A helical membrane pass occupies residues 405-425; sequence MNIIDIVSILPYFITLGTDLA. Topologically, residues 426–440 are extracellular; it reads QQQGGGNGQQQQAMS. The helical; Voltage-sensor transmembrane segment at 441 to 461 threads the bilayer; that stretch reads FAILRIIRLVRVFRIFKLSRH. At 462–476 the chain is on the cytoplasmic side; the sequence is SKGLQILGHTLRASM. Residues 463–476 form an S4-S5 linker region; it reads KGLQILGHTLRASM. A helical transmembrane segment spans residues 477 to 498; the sequence is RELGLLIFFLFIGVILFSSAVY. The Extracellular portion of the chain corresponds to 499-512; sequence FAEADEPTTHFQSI. Positions 513 to 524 form an intramembrane region, helical; sequence PDAFWWAVVTMT. Positions 525-530 match the Selectivity filter motif; the sequence is TVGYGD. The stretch at 525-532 is an intramembrane region; the sequence is TVGYGDMK. Over 533-539 the chain is Extracellular; the sequence is PITVGGK. Residues 540 to 568 form a helical membrane-spanning segment; the sequence is IVGSLCAIAGVLTIALPVPVIVSNFNYFY. Over 569–654 the chain is Cytoplasmic; the sequence is HRETENEEQT…SNAKAVETDV (86 aa). At Ser600 the chain carries Phosphoserine; by PKA. Positions 630–641 are enriched in basic and acidic residues; it reads CQGKGDDSETDK. A disordered region spans residues 630–654; the sequence is CQGKGDDSETDKNNCSNAKAVETDV. The PDZ-binding signature appears at 652 to 654; it reads TDV.

It belongs to the potassium channel family. A (Shaker) (TC 1.A.1.2) subfamily. Kv1.4/KCNA4 sub-subfamily. Homotetramer and heterotetramer of potassium channel proteins. Interacts with KCNAB1 and KCNAB2. Interacts with DLG1, DLG2 and DLG4 via their PDZ domains. Interacts with SIGMAR1. Detected in a complex with KCNA1. Interacts with KCNA2. Part of a complex containing KCNA1, KCNAB1 and LGI1. Interacts (via cytoplasmic N-terminal domain) with KCNRG. Detectable in brain, atrium, left and right ventricle, and kidney, but not in skeletal muscle, endothelial cells, aorta, and liver.

The protein resides in the cell membrane. It localises to the cell projection. The protein localises to the axon. The catalysed reaction is K(+)(in) = K(+)(out). Functionally, voltage-gated potassium channel that mediates transmembrane potassium transport in excitable membranes. Forms tetrameric potassium-selective channels through which potassium ions pass in accordance with their electrochemical gradient. The channel alternates between opened and closed conformations in response to the voltage difference across the membrane. Can form functional homotetrameric channels and heterotetrameric channels that contain variable proportions of KCNA1, KCNA2, KCNA4, KCNA5, and possibly other family members as well; channel properties depend on the type of alpha subunits that are part of the channel. Channel properties are modulated by cytoplasmic beta subunits that regulate the subcellular location of the alpha subunits and promote rapid inactivation. In vivo, membranes probably contain a mixture of heteromeric potassium channel complexes, making it difficult to assign currents observed in intact tissues to any particular potassium channel family member. Homotetrameric KCNA4 forms a potassium channel that opens in response to membrane depolarization, followed by rapid spontaneous channel closure. Likewise, a heterotetrameric channel formed by KCNA1 and KCNA4 shows rapid inactivation. This Mustela putorius furo (European domestic ferret) protein is Potassium voltage-gated channel subfamily A member 4 (KCNA4).